The chain runs to 309 residues: Taste receptor type 2 member 113 (309 aa).

Topologically, residues 1 to 8 (MVAVLQST) are extracellular. Residues 9–29 (FAIIFSMEFIVGTLGNGFIIL) form a helical membrane-spanning segment. Residues 30–55 (MTCIDWVRRRKISLVDQILTALAITR) lie on the Cytoplasmic side of the membrane. A helical transmembrane segment spans residues 56-76 (ITLILLVFIDWWVSVLFPALH). The Extracellular segment spans residues 77-101 (ETGKILRMYFISWTVINHCNLWLTA). The helical transmembrane segment at 102–122 (SLSIIYFLKIASFSSIIFLYL) threads the bilayer. At 123–127 (KFRVK) the chain is on the cytoplasmic side. The chain crosses the membrane as a helical span at residues 128–148 (NVVFVTLLVSLFFLFINTAIV). The Extracellular segment spans residues 149–185 (NVYFDVCFDGVQRNVSQVSRLYNHEQICKFLSFTNPM). Asparagine 162 is a glycosylation site (N-linked (GlcNAc...) asparagine). A helical transmembrane segment spans residues 186-206 (FAFIPFVTSMATFFLLIFSLW). At 207-229 (RHLKNMKHNAEGCRDVSTIVHIR) the chain is on the cytoplasmic side. A helical transmembrane segment spans residues 230 to 250 (ALQTIIVSVVLYSTFFLSFFV). At 251–262 (KVWSSGSPERYL) the chain is on the extracellular side. A helical membrane pass occupies residues 263–283 (IFLFVWALGNAVLPAHTFVLI). Topologically, residues 284 to 309 (WGNCRLRWASLSLMLWLRYRFKNIDV) are cytoplasmic.

It belongs to the G-protein coupled receptor T2R family.

It localises to the membrane. In terms of biological role, putative taste receptor which may play a role in the perception of bitterness. This Rattus norvegicus (Rat) protein is Taste receptor type 2 member 113.